The following is a 147-amino-acid chain: Large ribosomal subunit protein bL9 (147 aa).

Belongs to the bacterial ribosomal protein bL9 family.

In terms of biological role, binds to the 23S rRNA. In Halothermothrix orenii (strain H 168 / OCM 544 / DSM 9562), this protein is Large ribosomal subunit protein bL9.